Here is a 371-residue protein sequence, read N- to C-terminus: N-acetyldiaminopimelate deacetylase (371 aa).

Residue aspartate 68 is part of the active site. The active-site Proton acceptor is glutamate 127.

It belongs to the peptidase M20A family. N-acetyldiaminopimelate deacetylase subfamily.

The catalysed reaction is N-acetyl-(2S,6S)-2,6-diaminopimelate + H2O = (2S,6S)-2,6-diaminopimelate + acetate. Its pathway is amino-acid biosynthesis; L-lysine biosynthesis via DAP pathway; LL-2,6-diaminopimelate from (S)-tetrahydrodipicolinate (acetylase route): step 3/3. Functionally, catalyzes the conversion of N-acetyl-diaminopimelate to diaminopimelate and acetate. This Listeria innocua serovar 6a (strain ATCC BAA-680 / CLIP 11262) protein is N-acetyldiaminopimelate deacetylase.